The primary structure comprises 296 residues: Phosphoribosylaminoimidazole-succinocarboxamide synthase (296 aa).

Belongs to the SAICAR synthetase family.

The enzyme catalyses 5-amino-1-(5-phospho-D-ribosyl)imidazole-4-carboxylate + L-aspartate + ATP = (2S)-2-[5-amino-1-(5-phospho-beta-D-ribosyl)imidazole-4-carboxamido]succinate + ADP + phosphate + 2 H(+). It participates in purine metabolism; IMP biosynthesis via de novo pathway; 5-amino-1-(5-phospho-D-ribosyl)imidazole-4-carboxamide from 5-amino-1-(5-phospho-D-ribosyl)imidazole-4-carboxylate: step 1/2. The polypeptide is Phosphoribosylaminoimidazole-succinocarboxamide synthase (Pelobacter propionicus (strain DSM 2379 / NBRC 103807 / OttBd1)).